The chain runs to 524 residues: ORC1-type DNA replication protein 4 (524 aa).

A compositionally biased stretch (polar residues) spans 1-23 (MTDKSNNPAPASDPSTTETSNDA). Residues 1–67 (MTDKSNNPAP…DDPSDEASRG (67 aa)) are disordered. ATP contacts are provided by residues 128-132 (TGKTA), Tyr-325, and Arg-337.

The protein belongs to the CDC6/cdc18 family.

In terms of biological role, involved in regulation of DNA replication. The polypeptide is ORC1-type DNA replication protein 4 (cdc6d) (Haloarcula marismortui (strain ATCC 43049 / DSM 3752 / JCM 8966 / VKM B-1809) (Halobacterium marismortui)).